The following is a 460-amino-acid chain: Chromosomal replication initiator protein DnaA (460 aa).

Residues 1–84 (MAVSLWQQCI…RFDIGSRPSA (84 aa)) are domain I, interacts with DnaA modulators. The domain II stretch occupies residues 84 to 123 (AKKPEPAPVAAVRVPNPQTKASVGTSFNTTEPVANANHRS). Positions 124–340 (NINPTYQFDN…GALNRVIANA (217 aa)) are domain III, AAA+ region. ATP is bound by residues Gly-168, Gly-170, Lys-171, and Thr-172. The domain IV, binds dsDNA stretch occupies residues 341–460 (NFTGRPITID…YANLIRTLSS (120 aa)).

The protein belongs to the DnaA family. Oligomerizes as a right-handed, spiral filament on DNA at oriC.

The protein localises to the cytoplasm. Plays an essential role in the initiation and regulation of chromosomal replication. ATP-DnaA binds to the origin of replication (oriC) to initiate formation of the DNA replication initiation complex once per cell cycle. Binds the DnaA box (a 9 base pair repeat at the origin) and separates the double-stranded (ds)DNA. Forms a right-handed helical filament on oriC DNA; dsDNA binds to the exterior of the filament while single-stranded (ss)DNA is stabiized in the filament's interior. The ATP-DnaA-oriC complex binds and stabilizes one strand of the AT-rich DNA unwinding element (DUE), permitting loading of DNA polymerase. After initiation quickly degrades to an ADP-DnaA complex that is not apt for DNA replication. Binds acidic phospholipids. The protein is Chromosomal replication initiator protein DnaA of Shewanella sp. (strain ANA-3).